A 428-amino-acid chain; its full sequence is Adenylosuccinate synthetase (428 aa).

Residues 12 to 18 (GDEGKGK) and 40 to 42 (GHT) contribute to the GTP site. Asp13 serves as the catalytic Proton acceptor. 2 residues coordinate Mg(2+): Asp13 and Gly40. Residues 13–16 (DEGK), 38–41 (NAGH), Thr130, Arg144, Gln225, Thr240, and Arg304 each bind IMP. His41 functions as the Proton donor in the catalytic mechanism. Residue 300–306 (VTTGRAR) participates in substrate binding. Residues Arg306, 332 to 334 (KID), and 414 to 416 (SVG) contribute to the GTP site.

Belongs to the adenylosuccinate synthetase family. In terms of assembly, homodimer. Mg(2+) is required as a cofactor.

The protein localises to the cytoplasm. The enzyme catalyses IMP + L-aspartate + GTP = N(6)-(1,2-dicarboxyethyl)-AMP + GDP + phosphate + 2 H(+). It participates in purine metabolism; AMP biosynthesis via de novo pathway; AMP from IMP: step 1/2. Its function is as follows. Plays an important role in the de novo pathway of purine nucleotide biosynthesis. Catalyzes the first committed step in the biosynthesis of AMP from IMP. The chain is Adenylosuccinate synthetase from Clostridium botulinum (strain Okra / Type B1).